We begin with the raw amino-acid sequence, 201 residues long: Cobalt-precorrin-7 C(5)-methyltransferase (201 aa).

This sequence belongs to the precorrin methyltransferase family.

It catalyses the reaction Co-precorrin-7 + S-adenosyl-L-methionine = Co-precorrin-8X + S-adenosyl-L-homocysteine + H(+). The protein operates within cofactor biosynthesis; adenosylcobalamin biosynthesis; cob(II)yrinate a,c-diamide from sirohydrochlorin (anaerobic route): step 8/10. In terms of biological role, catalyzes the methylation of C-5 in cobalt-precorrin-7 to form cobalt-precorrin-8. This chain is Cobalt-precorrin-7 C(5)-methyltransferase (cbiE), found in Salmonella typhi.